The following is a 132-amino-acid chain: ATP synthase epsilon chain (132 aa).

The protein belongs to the ATPase epsilon chain family. As to quaternary structure, F-type ATPases have 2 components, CF(1) - the catalytic core - and CF(0) - the membrane proton channel. CF(1) has five subunits: alpha(3), beta(3), gamma(1), delta(1), epsilon(1). CF(0) has three main subunits: a, b and c.

It localises to the cell inner membrane. Functionally, produces ATP from ADP in the presence of a proton gradient across the membrane. The chain is ATP synthase epsilon chain from Anaeromyxobacter dehalogenans (strain 2CP-1 / ATCC BAA-258).